We begin with the raw amino-acid sequence, 340 residues long: Selenide, water dikinase (340 aa).

Selenocysteine 17 is an active-site residue. Position 17 (selenocysteine 17) is a non-standard amino acid, selenocysteine. Residues lysine 20 and 45–47 (NNE) each bind ATP. Mg(2+) is bound at residue aspartate 48. ATP contacts are provided by residues aspartate 65, aspartate 88, and 136 to 138 (GHT). Residue aspartate 88 participates in Mg(2+) binding. Residue aspartate 224 participates in Mg(2+) binding.

It belongs to the selenophosphate synthase 1 family. Class I subfamily. Homodimer. Requires Mg(2+) as cofactor.

The catalysed reaction is hydrogenselenide + ATP + H2O = selenophosphate + AMP + phosphate + 2 H(+). Synthesizes selenophosphate from selenide and ATP. This Campylobacter jejuni subsp. jejuni serotype O:2 (strain ATCC 700819 / NCTC 11168) protein is Selenide, water dikinase.